We begin with the raw amino-acid sequence, 179 residues long: MSKTGTKITFYEDKNFQGRRYDCDCDCSDFHTYLSRCNSIRVEGGTWAVYERPDFAGYMYILPQGDYPEYQRWMGLNDRLSSCRALHLSSGGQYKIQIFEKGDFNGQMYETTEDCPSIMEQFHMREIHSCKVLDGAWIFYELPNYRGRQYLLDKKEYRKPVDWGAVSPAVQSFRRIVES.

S2 is subject to N-acetylserine. The segment at 2–5 (SKTG) is N-terminal arm. Beta/gamma crystallin 'Greek key' domains lie at 6–44 (TKITFYEDKNFQGRRYDCDCDCSDFHTYLSRCNSIRVEG) and 45–87 (GTWA…RALH). The interval 88 to 93 (LSSGGQ) is connecting peptide. 2 consecutive Beta/gamma crystallin 'Greek key' domains span residues 94 to 134 (YKIQ…KVLD) and 135 to 177 (GAWI…RRIV).

Belongs to the beta/gamma-crystallin family. In terms of assembly, monomer.

In terms of biological role, crystallins are the dominant structural components of the vertebrate eye lens. The protein is Gamma-crystallin S (CRYGS) of Oryctolagus cuniculus (Rabbit).